The sequence spans 396 residues: Diphosphomevalonate decarboxylase (396 aa).

(R)-5-diphosphomevalonate is bound by residues 19–22 (YWGK), Arg74, 153–158 (SGSACR), and Thr209.

It belongs to the diphosphomevalonate decarboxylase family. Homodimer.

The enzyme catalyses (R)-5-diphosphomevalonate + ATP = isopentenyl diphosphate + ADP + phosphate + CO2. It participates in isoprenoid biosynthesis; isopentenyl diphosphate biosynthesis via mevalonate pathway; isopentenyl diphosphate from (R)-mevalonate: step 3/3. In terms of biological role, diphosphomevalonate decarboxylase; part of the second module of ergosterol biosynthesis pathway that includes the middle steps of the pathway. MVD1/ERG19 converts diphosphomevalonate into isopentenyl diphosphate. The second module is carried out in the vacuole and involves the formation of farnesyl diphosphate, which is also an important intermediate in the biosynthesis of ubiquinone, dolichol, heme and prenylated proteins. Activity by the mevalonate kinase ERG12 first converts mevalonate into 5-phosphomevalonate. 5-phosphomevalonate is then further converted to 5-diphosphomevalonate by the phosphomevalonate kinase ERG8. The diphosphomevalonate decarboxylase MVD1/ERG19 then produces isopentenyl diphosphate. The isopentenyl-diphosphate delta-isomerase IDI1 then catalyzes the 1,3-allylic rearrangement of the homoallylic substrate isopentenyl (IPP) to its highly electrophilic allylic isomer, dimethylallyl diphosphate (DMAPP). Finally the farnesyl diphosphate synthase ERG20 catalyzes the sequential condensation of isopentenyl pyrophosphate with dimethylallyl pyrophosphate, and then with the resultant geranylpyrophosphate to the ultimate product farnesyl pyrophosphate. The protein is Diphosphomevalonate decarboxylase of Saccharomyces cerevisiae (strain ATCC 204508 / S288c) (Baker's yeast).